A 202-amino-acid polypeptide reads, in one-letter code: Cutinase (202 aa).

Positions 1–20 are cleaved as a signal peptide; that stretch reads MKTSAQQLLSALLLPLSVLA. C31 and C106 are oxidised to a cystine. S117 acts as the Nucleophile in catalysis. Residues C165 and C172 are joined by a disulfide bond. D169 is an active-site residue. The active-site Proton donor/acceptor is H182.

The protein belongs to the cutinase family. The 2 disulfide bonds play a critical role in holding the catalytic residues in juxta-position; reduction of the disulfide bridges results in the complete inactivation of the enzyme.

Its subcellular location is the secreted. It catalyses the reaction cutin + H2O = cutin monomers.. Functionally, catalyzes the hydrolysis of complex carboxylic polyesters found in the cell wall of plants. Degrades cutin, a macromolecule that forms the structure of the plant cuticle. Allows pathogenic fungi to penetrate through the cuticular barrier into the host plant during the initial stage of fungal infection. This Botryotinia fuckeliana (Noble rot fungus) protein is Cutinase.